Here is a 155-residue protein sequence, read N- to C-terminus: uncharacterized protein (155 aa).

Residues isoleucine 4–phenylalanine 65 form the HTH asnC-type domain. A DNA-binding region (H-T-H motif) is located at residues leucine 23–glutamate 42.

This is an uncharacterized protein from Pyrococcus furiosus (strain ATCC 43587 / DSM 3638 / JCM 8422 / Vc1).